The following is a 459-amino-acid chain: Phosphoenolpyruvate carboxylase (459 aa).

Belongs to the PEPCase type 2 family. Homotetramer. Mg(2+) serves as cofactor.

It catalyses the reaction oxaloacetate + phosphate = phosphoenolpyruvate + hydrogencarbonate. Its function is as follows. Catalyzes the irreversible beta-carboxylation of phosphoenolpyruvate (PEP) to form oxaloacetate (OAA), a four-carbon dicarboxylic acid source for the tricarboxylic acid cycle. This chain is Phosphoenolpyruvate carboxylase, found in Pyrobaculum calidifontis (strain DSM 21063 / JCM 11548 / VA1).